The primary structure comprises 352 residues: Protein Wnt-3a (352 aa).

The N-terminal stretch at 1-18 is a signal peptide; sequence MAPLGYLLVLCSLKQALG. Intrachain disulfides connect Cys77-Cys88, Cys128-Cys136, Cys138-Cys155, Cys203-Cys217, Cys205-Cys212, Cys281-Cys312, Cys297-Cys307, Cys311-Cys351, Cys327-Cys342, Cys329-Cys339, and Cys334-Cys335. Asn87 carries an N-linked (GlcNAc...) asparagine glycan. Ser209 carries the O-palmitoleoyl serine; by PORCN lipid modification. The N-linked (GlcNAc...) asparagine glycan is linked to Asn298.

The protein belongs to the Wnt family. As to quaternary structure, forms a soluble 1:1 complex with AFM; this prevents oligomerization and is required for prolonged biological activity. The complex with AFM may represent the physiological form in body fluids. Homooligomer; disulfide-linked, leading to inactivation. Interacts with APCDD1 and WLS. Component of the Wnt-Fzd-LRP5-LRP6 signaling complex that contains a WNT protein, a FZD protein and LRP5 or LRP6. Interacts directly in the complex with LRP6. Interacts with PORCN. Interacts with glypican GPC3. Interacts with PKD1 (via extracellular domain). Interacts with FZD5. Proteolytic processing by TIKI1 and TIKI2 promotes oxidation and formation of large disulfide-bond oligomers, leading to inactivation of WNT3A. Post-translationally, disulfide bonds have critical and distinct roles in secretion and activity. Loss of each conserved cysteine in WNT3A results in high molecular weight oxidized Wnt oligomers, which are formed through inter-Wnt disulfide bonding. In terms of processing, palmitoleoylation by PORCN is required for efficient binding to frizzled receptors. Palmitoleoylation is required for proper trafficking to cell surface, vacuolar acidification is critical to release palmitoleoylated WNT3A from WLS in secretory vesicles. Depalmitoleoylated by NOTUM, leading to inhibit Wnt signaling pathway, possibly by promoting disulfide bond formation and oligomerization. As to expression, dorsal portion of the neural tube (developing roof plate), and mesenchyme tissue surrounding the umbilical veins.

It localises to the secreted. It is found in the extracellular space. Its subcellular location is the extracellular matrix. Functionally, ligand for members of the frizzled family of seven transmembrane receptors. Functions in the canonical Wnt signaling pathway that results in activation of transcription factors of the TCF/LEF family. Required for normal embryonic mesoderm development and formation of caudal somites. Required for normal morphogenesis of the developing neural tube. Mediates self-renewal of the stem cells at the bottom on intestinal crypts (in vitro). The chain is Protein Wnt-3a (Wnt3a) from Mus musculus (Mouse).